The primary structure comprises 150 residues: 15 kDa calcium-binding protein (150 aa).

Alanine 1 is subject to N-acetylalanine. 4 consecutive EF-hand domains span residues 7 to 42, 43 to 78, 81 to 116, and 118 to 150; these read TDAE…AGKS, FSEE…KMMK, WKKS…RIEP, and MSKE…IKSS. Positions 22, 24, 26, 28, 56, 58, 60, 62, 67, 94, 96, 98, 105, 131, 133, 135, 137, and 142 each coordinate Ca(2+).

It localises to the nucleus. The protein localises to the cytoplasm. Its subcellular location is the cytoskeleton. It is found in the spindle. In terms of biological role, may play an important role in mitosis of sea urchin egg. May function as a Ca(2+)-dependent intracellular modulator of microtubule assembly. This chain is 15 kDa calcium-binding protein, found in Hemicentrotus pulcherrimus (Sea urchin).